Consider the following 488-residue polypeptide: MTERKNLTTNQGTPVGDNQNSMTAGLKGPTLLEDYVLIEKLAHFDRERVPERVVHARGAGAHGKFVTKKSMKKYTIANFLQEEGTETEVFARFSTVIHGQHSPETLRDPRGFSVKFYTEEGNYDFVGNNLPVFFIRDAIKFPDVIHSLKPDPRTNIQDGNRYWDFFSLSPEATTMIMYLFSDEGTPASYREIRGSSVHAFKWINEEGKTVYVKLRWVPKAGIVNLSTEQAAQIQAKEFNHASRDLYEAIENGDYPEWDLYVQVLDPKDLDSFDFNPLDATKDWFEDVFPYEHVGTMTLNRNPDNIFAETESVGFNPGVLVRGMLPSEDRLLQGRLFSYSDTQRHRVGPNYLQLPINSPKAPVANNQRDGYMPFKQQTSSINYEPNSYETEPKENPAFIEQEQEIRGDISGRLIAEKPNNFGHAKEVWDRYSDAERAALVKNIVDDWSGVRDDIKIRNLRNFYQIEPEFANRVADGTGINLEEHVADLK.

The interval 1–24 is disordered; it reads MTERKNLTTNQGTPVGDNQNSMTA. Residues 7 to 23 are compositionally biased toward polar residues; that stretch reads LTTNQGTPVGDNQNSMT. Active-site residues include His-55 and Asn-128. Tyr-338 contacts heme.

This sequence belongs to the catalase family. Heme serves as cofactor.

It is found in the cytoplasm. It catalyses the reaction 2 H2O2 = O2 + 2 H2O. Functionally, decomposes hydrogen peroxide into water and oxygen; serves to protect cells from the toxic effects of hydrogen peroxide. The polypeptide is Catalase (kat) (Listeria innocua serovar 6a (strain ATCC BAA-680 / CLIP 11262)).